A 581-amino-acid chain; its full sequence is Protein phosphatase 2C 70 (581 aa).

Over M1 to N7 the chain is Extracellular. A helical transmembrane segment spans residues I8–C28. Topologically, residues K29–L581 are cytoplasmic. Residues V208 to I259 form the FHA domain. The region spanning K304 to F577 is the PPM-type phosphatase domain. 4 residues coordinate Mn(2+): D346, G347, D521, and D568.

In terms of assembly, association of RLK5 with kapp domain is dependent on phosphorylation of RLK5 and can be abolished by dephosphorylation. Interacts with SERK1 and CDC48A. Component of the SERK1 signaling complex, composed of KAPP, CDC48A, GRF6 or GRF7, SERK1, SERK2, SERK3/BAK1 and BRI1. Interacts with CLV1. Mg(2+) is required as a cofactor. The cofactor is Mn(2+). As to expression, expressed in all tissues examined.

The protein localises to the cell membrane. It catalyses the reaction O-phospho-L-seryl-[protein] + H2O = L-seryl-[protein] + phosphate. The enzyme catalyses O-phospho-L-threonyl-[protein] + H2O = L-threonyl-[protein] + phosphate. In terms of biological role, dephosphorylates the Ser/Thr receptor-like kinase RLK5. May function as a signaling component in a pathway involving RLK5. Binds and dephosphorylates CLAVATA1 (CLV1). Functions as a negative regulator of the CLV1 signaling in plant development. Dephosphorylates SERK1 receptor kinase on threonine residues in the A-loop. Dephosphorylation of SERK1 controls SERK1 internalization. Component of a signaling pathway which mediates adaptation to NaCl stress. Is not a component of the SALT OVERLY SENSITIVE (SOS) pathway. This Arabidopsis thaliana (Mouse-ear cress) protein is Protein phosphatase 2C 70.